Here is a 247-residue protein sequence, read N- to C-terminus: ATP synthase subunit a, chloroplastic (247 aa).

Helical transmembrane passes span 38–58 (QVLI…IVTV), 95–115 (VPFI…GALL), 134–154 (INTT…AGLS), 199–219 (LVVV…VMFL), and 220–240 (GLFT…AYIG).

This sequence belongs to the ATPase A chain family. As to quaternary structure, F-type ATPases have 2 components, CF(1) - the catalytic core - and CF(0) - the membrane proton channel. CF(1) has five subunits: alpha(3), beta(3), gamma(1), delta(1), epsilon(1). CF(0) has four main subunits: a, b, b' and c.

It localises to the plastid. Its subcellular location is the chloroplast thylakoid membrane. Functionally, key component of the proton channel; it plays a direct role in the translocation of protons across the membrane. This Populus trichocarpa (Western balsam poplar) protein is ATP synthase subunit a, chloroplastic.